Here is a 162-residue protein sequence, read N- to C-terminus: Transcription elongation factor GreA (162 aa).

Positions 9 to 38 (QGYKALEEELARLKSERPEIIQAIKEAREE) form a coiled coil.

The protein belongs to the GreA/GreB family.

In terms of biological role, necessary for efficient RNA polymerase transcription elongation past template-encoded arresting sites. The arresting sites in DNA have the property of trapping a certain fraction of elongating RNA polymerases that pass through, resulting in locked ternary complexes. Cleavage of the nascent transcript by cleavage factors such as GreA or GreB allows the resumption of elongation from the new 3'terminus. GreA releases sequences of 2 to 3 nucleotides. This chain is Transcription elongation factor GreA, found in Desulfovibrio desulfuricans (strain ATCC 27774 / DSM 6949 / MB).